A 340-amino-acid polypeptide reads, in one-letter code: Protein FAM50A-A (340 aa).

Disordered stretches follow at residues 1 to 22 and 123 to 178; these read MAQY…KKRE and NLEE…EEEN. Residues 124–146 show a composition bias toward acidic residues; that stretch reads LEEDEECEDEEGEEEESDKEDPP. A compositionally biased stretch (basic and acidic residues) spans 169–178; that stretch reads PDRDREEEEN.

The protein localises to the nucleus. Probably involved in the regulation of pre-mRNA splicing. The polypeptide is Protein FAM50A-A (fam50a-a) (Xenopus laevis (African clawed frog)).